A 566-amino-acid chain; its full sequence is Mucolipin-2 (566 aa).

The Cytoplasmic portion of the chain corresponds to 1 to 65 (MARQPYRFPQ…YRARRQIPWK (65 aa)). The chain crosses the membrane as a helical span at residues 66 to 86 (LGLQILKIVMVTTQLVRFGLS). Residues 87-288 (NQLVVAFKED…IFGSTQKNAQ (202 aa)) lie on the Extracellular side of the membrane. The extracellular/lumenal pore loop stretch occupies residues 107 to 123 (KGYSGTDEDDYSCSVYT). Disulfide bonds link C164-C190 and C243-C274. Residues 289-309 (YVLVFDAFVIVICLASLILCT) form a helical membrane-spanning segment. The Cytoplasmic segment spans residues 310-346 (RSIVLALRLRKRFLNFFLEKYKRPVCDTDQWEFINGW). A helical membrane pass occupies residues 347–367 (YVLVIISDLMTIIGSILKMEI). Topologically, residues 368 to 376 (KAKNLTNYD) are extracellular. The helical transmembrane segment at 377–397 (LCSIFLGTSTLLVWVGVIRYL) threads the bilayer. The Cytoplasmic portion of the chain corresponds to 398–419 (GYFQAYNVLILTMQASLPKVLR). The chain crosses the membrane as a helical span at residues 420-440 (FCACAGMIYLGYTFCGWIVLG). Residues 441 to 448 (PYHDKFEN) lie on the Extracellular side of the membrane. Positions 449–469 (LNTVAECLFSLVNGDDMFATF) form an intramembrane region, pore-forming. Residues 461–464 (NGDD) carry the Selectivity filter motif. Topologically, residues 470–480 (AQIQQKSILVW) are extracellular. Residues 481–502 (LFSRLYLYSFISLFIYMILSLF) form a helical membrane-spanning segment. Residues 503–566 (IALITDSYDT…RSDDHLIPIS (64 aa)) lie on the Cytoplasmic side of the membrane.

Belongs to the transient receptor (TC 1.A.4) family. Polycystin subfamily. MCOLN2 sub-subfamily. In terms of assembly, forms homooligomeric complexes; probably tetrameric. Can heterooligomerize with MCOLN1; heteromeric assemblies have different channel properties as compared to the respective homooligomers and may be tissue-specific. Interacts with TMEM176A.

Its subcellular location is the cell membrane. The protein localises to the late endosome membrane. It is found in the lysosome membrane. It localises to the recycling endosome membrane. It carries out the reaction Ca(2+)(in) = Ca(2+)(out). The catalysed reaction is Fe(2+)(in) = Fe(2+)(out). Its activity is regulated as follows. Channel activity is reduced by low extracellular/lumenal pH level. Its function is as follows. Nonselective cation channel probably playing a role in the regulation of membrane trafficking events. Acts as a Ca(2+)-permeable cation channel with inwardly rectifying activity. May activate ARF6 and be involved in the trafficking of GPI-anchored cargo proteins to the cell surface via the ARF6-regulated recycling pathway. May play a role in immune processes. In adaptive immunity, TRPML2 and TRPML1 may play redundant roles in the function of the specialized lysosomes of B cells. In the innate immune response, may play a role in the regulation of chemokine secretion and macrophage migration. Through a possible and probably tissue-specific heteromerization with MCOLN1 may be at least in part involved in many lysosome-dependent cellular events. Also functions as a Fe(2+) permeable channel. This Homo sapiens (Human) protein is Mucolipin-2.